An 86-amino-acid chain; its full sequence is Small ribosomal subunit protein bS20 (86 aa).

The protein belongs to the bacterial ribosomal protein bS20 family.

Its function is as follows. Binds directly to 16S ribosomal RNA. In Sulfurimonas denitrificans (strain ATCC 33889 / DSM 1251) (Thiomicrospira denitrificans (strain ATCC 33889 / DSM 1251)), this protein is Small ribosomal subunit protein bS20.